The sequence spans 221 residues: Large ribosomal subunit protein uL16A (221 aa).

Belongs to the universal ribosomal protein uL16 family. Component of the large ribosomal subunit (LSU). Mature yeast ribosomes consist of a small (40S) and a large (60S) subunit. The 40S small subunit contains 1 molecule of ribosomal RNA (18S rRNA) and at least 33 different proteins. The large 60S subunit contains 3 rRNA molecules (25S, 5.8S and 5S rRNA) and at least 46 different proteins.

It is found in the cytoplasm. In terms of biological role, component of the ribosome, a large ribonucleoprotein complex responsible for the synthesis of proteins in the cell. The small ribosomal subunit (SSU) binds messenger RNAs (mRNAs) and translates the encoded message by selecting cognate aminoacyl-transfer RNA (tRNA) molecules. The large subunit (LSU) contains the ribosomal catalytic site termed the peptidyl transferase center (PTC), which catalyzes the formation of peptide bonds, thereby polymerizing the amino acids delivered by tRNAs into a polypeptide chain. The nascent polypeptides leave the ribosome through a tunnel in the LSU and interact with protein factors that function in enzymatic processing, targeting, and the membrane insertion of nascent chains at the exit of the ribosomal tunnel. In Schizosaccharomyces pombe (strain 972 / ATCC 24843) (Fission yeast), this protein is Large ribosomal subunit protein uL16A (rpl1001).